We begin with the raw amino-acid sequence, 76 residues long: MEKLTILLLVAAVLMSTQALVERAGENHSKENINFLLKRKRAADRGMWGECKDGLTTCLAPSECCSEDCEGSCTMW.

The N-terminal stretch at 1-19 (MEKLTILLLVAAVLMSTQA) is a signal peptide. Residues 20–45 (LVERAGENHSKENINFLLKRKRAADR) constitute a propeptide that is removed on maturation. Tryptophan 48 carries the post-translational modification 6'-bromotryptophan. The residue at position 50 (glutamate 50) is a 4-carboxyglutamate. Disulfide bonds link cysteine 51-cysteine 65, cysteine 58-cysteine 69, and cysteine 64-cysteine 73. Proline 61 is subject to 4-hydroxyproline. 4-carboxyglutamate is present on residues glutamate 63, glutamate 67, and glutamate 70. Tryptophan 76 is subject to 6'-bromotryptophan.

As to expression, expressed by the venom duct.

It localises to the secreted. The protein is Conotoxin Gla(1)-TxVI of Conus textile (Cloth-of-gold cone).